Here is a 471-residue protein sequence, read N- to C-terminus: Regulator of microtubule dynamics protein 3 (471 aa).

The Mitochondrial intermembrane segment spans residues 1-12 (MSRLGALGGSRA). A helical transmembrane segment spans residues 13 to 35 (GLGLLLGTAAGLGFLCVLYSQRW). Residues 36–471 (KRTQRHGRSQ…LEELEVILGK (436 aa)) are Cytoplasmic-facing. 4 positions are modified to phosphoserine: serine 44, serine 46, serine 50, and serine 57. Positions 91-125 (LDRLDFVLTSLMALRREVEELQRSLQGLAGEIVGE) form a coiled coil. Residues 157-163 (VYFTASS) carry the FFAT motif. At threonine 160 the chain carries Phosphothreonine. The interval 168–203 (TDAESEGGYTTANAESDYERDSDKESEDAEDEVSCE) is disordered. A phosphoserine mark is found at serine 183, serine 193, serine 212, and serine 233. Over residues 191–201 (KESEDAEDEVS) the composition is skewed to acidic residues.

Belongs to the RMDN family. Interacts with PTPN2. Interacts with microtubules. Interacts with VAPB. Interacts (via FFAT motif) with MOSPD2 (via MSP domain). Interacts (via phosphorylated FFAT motif) with MOSPD2, VAPA and VAPB. In terms of processing, phosphorylation at Thr-160 of the FFAT motif activates interaction with MOSPD2, VAPA and VAPB.

Its subcellular location is the mitochondrion outer membrane. The protein localises to the cytoplasm. It is found in the nucleus. It localises to the cytoskeleton. The protein resides in the spindle. Its subcellular location is the spindle pole. Involved in cellular calcium homeostasis regulation. May participate in differentiation and apoptosis of keratinocytes. Overexpression induces apoptosis. This is Regulator of microtubule dynamics protein 3 from Rattus norvegicus (Rat).